The sequence spans 413 residues: 4-hydroxy-3-methylbut-2-en-1-yl diphosphate synthase (flavodoxin) (413 aa).

Positions 305, 308, 351, and 358 each coordinate [4Fe-4S] cluster.

The protein belongs to the IspG family. The cofactor is [4Fe-4S] cluster.

The enzyme catalyses (2E)-4-hydroxy-3-methylbut-2-enyl diphosphate + oxidized [flavodoxin] + H2O + 2 H(+) = 2-C-methyl-D-erythritol 2,4-cyclic diphosphate + reduced [flavodoxin]. Its pathway is isoprenoid biosynthesis; isopentenyl diphosphate biosynthesis via DXP pathway; isopentenyl diphosphate from 1-deoxy-D-xylulose 5-phosphate: step 5/6. Its function is as follows. Converts 2C-methyl-D-erythritol 2,4-cyclodiphosphate (ME-2,4cPP) into 1-hydroxy-2-methyl-2-(E)-butenyl 4-diphosphate. This is 4-hydroxy-3-methylbut-2-en-1-yl diphosphate synthase (flavodoxin) from Bartonella tribocorum (strain CIP 105476 / IBS 506).